The chain runs to 243 residues: 2-C-methyl-D-erythritol 4-phosphate cytidylyltransferase (243 aa).

The protein belongs to the IspD/TarI cytidylyltransferase family. IspD subfamily.

The catalysed reaction is 2-C-methyl-D-erythritol 4-phosphate + CTP + H(+) = 4-CDP-2-C-methyl-D-erythritol + diphosphate. It functions in the pathway isoprenoid biosynthesis; isopentenyl diphosphate biosynthesis via DXP pathway; isopentenyl diphosphate from 1-deoxy-D-xylulose 5-phosphate: step 2/6. Catalyzes the formation of 4-diphosphocytidyl-2-C-methyl-D-erythritol from CTP and 2-C-methyl-D-erythritol 4-phosphate (MEP). In Pelodictyon phaeoclathratiforme (strain DSM 5477 / BU-1), this protein is 2-C-methyl-D-erythritol 4-phosphate cytidylyltransferase.